A 437-amino-acid polypeptide reads, in one-letter code: Glutamate-1-semialdehyde 2,1-aminomutase 1 (437 aa).

Position 268 is an N6-(pyridoxal phosphate)lysine (K268).

The protein belongs to the class-III pyridoxal-phosphate-dependent aminotransferase family. HemL subfamily. As to quaternary structure, homodimer. The cofactor is pyridoxal 5'-phosphate.

The protein resides in the cytoplasm. The enzyme catalyses (S)-4-amino-5-oxopentanoate = 5-aminolevulinate. The protein operates within porphyrin-containing compound metabolism; protoporphyrin-IX biosynthesis; 5-aminolevulinate from L-glutamyl-tRNA(Glu): step 2/2. The protein is Glutamate-1-semialdehyde 2,1-aminomutase 1 of Halalkalibacterium halodurans (strain ATCC BAA-125 / DSM 18197 / FERM 7344 / JCM 9153 / C-125) (Bacillus halodurans).